Consider the following 207-residue polypeptide: Acyl-homoserine-lactone synthase (207 aa).

This sequence belongs to the autoinducer synthase family.

The enzyme catalyses a fatty acyl-[ACP] + S-adenosyl-L-methionine = an N-acyl-L-homoserine lactone + S-methyl-5'-thioadenosine + holo-[ACP] + H(+). Functionally, required for the synthesis of N-butanoyl-L-homoserine lactone (BHL), an autoinducer molecule which binds to AhyR. The polypeptide is Acyl-homoserine-lactone synthase (ahyI) (Aeromonas hydrophila).